A 587-amino-acid chain; its full sequence is 5-aminolevulinate synthase, erythroid-specific, mitochondrial (587 aa).

A mitochondrion-targeting transit peptide spans 1–49; that stretch reads MVTAAMLLQCCPVPARGPTSLLGKVVKTHQFLFGIGRCPILATQGPNCS. Succinyl-CoA is bound at residue Arg-163. The pyridoxal 5'-phosphate site is built by Cys-258 and Phe-259. Positions 280 and 299 each coordinate succinyl-CoA. Pyridoxal 5'-phosphate-binding residues include Ser-332, His-360, and Thr-388. Residue Lys-391 is part of the active site. Lys-391 is subject to N6-(pyridoxal phosphate)lysine. Pyridoxal 5'-phosphate contacts are provided by Thr-420 and Thr-421. Thr-508 contributes to the succinyl-CoA binding site.

It belongs to the class-II pyridoxal-phosphate-dependent aminotransferase family. In terms of assembly, homodimer. Interacts with SUCLA2. The cofactor is pyridoxal 5'-phosphate.

It localises to the mitochondrion inner membrane. It carries out the reaction succinyl-CoA + glycine + H(+) = 5-aminolevulinate + CO2 + CoA. It functions in the pathway porphyrin-containing compound metabolism; protoporphyrin-IX biosynthesis; 5-aminolevulinate from glycine: step 1/1. Functionally, catalyzes the pyridoxal 5'-phosphate (PLP)-dependent condensation of succinyl-CoA and glycine to form aminolevulinic acid (ALA), with CoA and CO2 as by-products. Contributes significantly to heme formation during erythropoiesis. In Pongo abelii (Sumatran orangutan), this protein is 5-aminolevulinate synthase, erythroid-specific, mitochondrial (ALAS2).